Here is a 358-residue protein sequence, read N- to C-terminus: Phospho-N-acetylmuramoyl-pentapeptide-transferase (358 aa).

10 helical membrane passes run 28-48, 70-90, 92-112, 133-153, 165-185, 196-216, 233-253, 260-280, 285-305, and 335-355; these read AALM…ITWL, TPTM…LLWA, LTNI…AVGF, MGGQ…NPDY, VTFD…VAAS, GLAI…IYIT, VGEV…FLWF, VFMG…LALL, LVLA…IVQV, and KIII…LSVL.

This sequence belongs to the glycosyltransferase 4 family. MraY subfamily. Mg(2+) is required as a cofactor.

The protein resides in the cell inner membrane. The enzyme catalyses UDP-N-acetyl-alpha-D-muramoyl-L-alanyl-gamma-D-glutamyl-meso-2,6-diaminopimeloyl-D-alanyl-D-alanine + di-trans,octa-cis-undecaprenyl phosphate = di-trans,octa-cis-undecaprenyl diphospho-N-acetyl-alpha-D-muramoyl-L-alanyl-D-glutamyl-meso-2,6-diaminopimeloyl-D-alanyl-D-alanine + UMP. It participates in cell wall biogenesis; peptidoglycan biosynthesis. Catalyzes the initial step of the lipid cycle reactions in the biosynthesis of the cell wall peptidoglycan: transfers peptidoglycan precursor phospho-MurNAc-pentapeptide from UDP-MurNAc-pentapeptide onto the lipid carrier undecaprenyl phosphate, yielding undecaprenyl-pyrophosphoryl-MurNAc-pentapeptide, known as lipid I. This chain is Phospho-N-acetylmuramoyl-pentapeptide-transferase, found in Desulfovibrio desulfuricans (strain ATCC 27774 / DSM 6949 / MB).